We begin with the raw amino-acid sequence, 351 residues long: 3-dehydroquinate synthase (351 aa).

NAD(+)-binding positions include 60 to 65 (DGEEYK), 94 to 98 (GVISD), 118 to 119 (TT), K131, K140, and 158 to 161 (FLKT). Residues E173, H239, and H256 each contribute to the Zn(2+) site.

The protein belongs to the sugar phosphate cyclases superfamily. Dehydroquinate synthase family. The cofactor is Co(2+). Zn(2+) serves as cofactor. NAD(+) is required as a cofactor.

Its subcellular location is the cytoplasm. The enzyme catalyses 7-phospho-2-dehydro-3-deoxy-D-arabino-heptonate = 3-dehydroquinate + phosphate. It participates in metabolic intermediate biosynthesis; chorismate biosynthesis; chorismate from D-erythrose 4-phosphate and phosphoenolpyruvate: step 2/7. Its function is as follows. Catalyzes the conversion of 3-deoxy-D-arabino-heptulosonate 7-phosphate (DAHP) to dehydroquinate (DHQ). The polypeptide is 3-dehydroquinate synthase (Campylobacter jejuni subsp. jejuni serotype O:6 (strain 81116 / NCTC 11828)).